The following is a 769-amino-acid chain: Elongation factor G, mitochondrial (769 aa).

Residues 1–42 (MSKFLRGISSISSASLKARASNFGVFHGVCSARNLHQSRLCL) constitute a mitochondrion transit peptide. The 283-residue stretch at 74 to 356 (TRLRNIGVSA…AVVDYLPQPN (283 aa)) folds into the tr-type G domain. GTP contacts are provided by residues 83-90 (AHIDSGKT), 154-158 (DTPGH), and 208-211 (NKMD).

It belongs to the TRAFAC class translation factor GTPase superfamily. Classic translation factor GTPase family. EF-G/EF-2 subfamily.

Its subcellular location is the mitochondrion. The protein operates within protein biosynthesis; polypeptide chain elongation. Its function is as follows. Mitochondrial GTPase that catalyzes the GTP-dependent ribosomal translocation step during translation elongation. During this step, the ribosome changes from the pre-translocational (PRE) to the post-translocational (POST) state as the newly formed A-site-bound peptidyl-tRNA and P-site-bound deacylated tRNA move to the P and E sites, respectively. Catalyzes the coordinated movement of the two tRNA molecules, the mRNA and conformational changes in the ribosome. The sequence is that of Elongation factor G, mitochondrial from Debaryomyces hansenii (strain ATCC 36239 / CBS 767 / BCRC 21394 / JCM 1990 / NBRC 0083 / IGC 2968) (Yeast).